A 364-amino-acid chain; its full sequence is Phospho-N-acetylmuramoyl-pentapeptide-transferase (364 aa).

The next 10 helical transmembrane spans lie at 3–23, 51–71, 80–100, 116–136, 154–174, 185–205, 229–249, 256–276, 281–301, and 341–361; these read AILF…RVAI, TMGG…AKLI, ALLL…DDFI, MIGL…SWLE, IGWI…IIAA, LDGL…FVNI, PLDL…FLWW, IFMG…LAIL, LLLI…MLQV, and FWII…AEWV.

Belongs to the glycosyltransferase 4 family. MraY subfamily. The cofactor is Mg(2+).

It is found in the cell membrane. The catalysed reaction is UDP-N-acetyl-alpha-D-muramoyl-L-alanyl-gamma-D-glutamyl-meso-2,6-diaminopimeloyl-D-alanyl-D-alanine + di-trans,octa-cis-undecaprenyl phosphate = di-trans,octa-cis-undecaprenyl diphospho-N-acetyl-alpha-D-muramoyl-L-alanyl-D-glutamyl-meso-2,6-diaminopimeloyl-D-alanyl-D-alanine + UMP. Its pathway is cell wall biogenesis; peptidoglycan biosynthesis. Catalyzes the initial step of the lipid cycle reactions in the biosynthesis of the cell wall peptidoglycan: transfers peptidoglycan precursor phospho-MurNAc-pentapeptide from UDP-MurNAc-pentapeptide onto the lipid carrier undecaprenyl phosphate, yielding undecaprenyl-pyrophosphoryl-MurNAc-pentapeptide, known as lipid I. The sequence is that of Phospho-N-acetylmuramoyl-pentapeptide-transferase from Nocardioides sp. (strain ATCC BAA-499 / JS614).